We begin with the raw amino-acid sequence, 119 residues long: Enhancer of yellow 2 transcription factor (119 aa).

Residues 93 to 119 (LTENETEGTDNHDDDEDDEDENGTEDN) form a disordered region. The span at 96-119 (NETEGTDNHDDDEDDEDENGTEDN) shows a compositional bias: acidic residues.

The protein belongs to the ENY2 family. In terms of assembly, component of the nuclear pore complex (NPC)-associated AMEX complex (anchoring and mRNA export complex), composed of at least e(y)2 and xmas-2. Component of the SAGA transcription coactivator-HAT complexes, at least composed of Ada2b, e(y)2, Pcaf/Gcn5, Taf10 and Nipped-A/Trrap. Within the SAGA complex, e(y)2, Sgf11, and not/nonstop form an additional subcomplex of SAGA called the DUB module (deubiquitination module). Component of the THO complex, composed of at least e(y)2, HPR1, THO2, THOC5, THOC6 and THOC7. Interacts with e(y)1. Interacts with su(Hw) (via zinc fingers). Interacts with xmas-2; required for localization to the nuclear periphery. Interacts with the nuclear pore complex (NPC).

The protein resides in the nucleus. The protein localises to the nucleoplasm. It localises to the cytoplasm. Involved in mRNA export coupled transcription activation by association with both the AMEX and the SAGA complexes. The SAGA complex is a multiprotein complex that activates transcription by remodeling chromatin and mediating histone acetylation and deubiquitination. Within the SAGA complex, participates in a subcomplex that specifically deubiquitinates histone H2B. The SAGA complex is recruited to specific gene promoters by activators, where it is required for transcription. Required for nuclear receptor-mediated transactivation. Involved in transcription elongation by recruiting the THO complex onto nascent mRNA. The AMEX complex functions in docking export-competent ribonucleoprotein particles (mRNPs) to the nuclear entrance of the nuclear pore complex (nuclear basket). AMEX participates in mRNA export and accurate chromatin positioning in the nucleus by tethering genes to the nuclear periphery. In Drosophila willistoni (Fruit fly), this protein is Enhancer of yellow 2 transcription factor.